The following is a 76-amino-acid chain: Candidate secreted effector protein MPL124497 (76 aa).

The N-terminal stretch at 1–21 (MKLIIFAAISVAFMSFDQVLG) is a signal peptide.

It belongs to the CPGH1 family.

The protein localises to the secreted. The protein resides in the host cell. It is found in the host cytoplasm. It localises to the host nucleus. Rust effector delivered into infected tissues to modulate host functions and contribute to pathogen virulence. Enhances leaf colonization by the bacteria Pseudomonas syringae and the oomycete Hyaloperonospora arabidopsidis pathogens in an Arabidopsis thaliana infection model. The protein is Candidate secreted effector protein MPL124497 of Melampsora larici-populina (strain 98AG31 / pathotype 3-4-7) (Poplar leaf rust fungus).